We begin with the raw amino-acid sequence, 122 residues long: Large ribosomal subunit protein uL14 (122 aa).

This sequence belongs to the universal ribosomal protein uL14 family. As to quaternary structure, part of the 50S ribosomal subunit. Forms a cluster with proteins L3 and L19. In the 70S ribosome, L14 and L19 interact and together make contacts with the 16S rRNA in bridges B5 and B8.

Its function is as follows. Binds to 23S rRNA. Forms part of two intersubunit bridges in the 70S ribosome. In Rickettsia bellii (strain OSU 85-389), this protein is Large ribosomal subunit protein uL14.